The following is a 256-amino-acid chain: 1-(5-phosphoribosyl)-5-[(5-phosphoribosylamino)methylideneamino] imidazole-4-carboxamide isomerase (256 aa).

Catalysis depends on aspartate 8, which acts as the Proton acceptor. The active-site Proton donor is aspartate 129.

Belongs to the HisA/HisF family.

The protein resides in the cytoplasm. The catalysed reaction is 1-(5-phospho-beta-D-ribosyl)-5-[(5-phospho-beta-D-ribosylamino)methylideneamino]imidazole-4-carboxamide = 5-[(5-phospho-1-deoxy-D-ribulos-1-ylimino)methylamino]-1-(5-phospho-beta-D-ribosyl)imidazole-4-carboxamide. Its pathway is amino-acid biosynthesis; L-histidine biosynthesis; L-histidine from 5-phospho-alpha-D-ribose 1-diphosphate: step 4/9. This Picosynechococcus sp. (strain ATCC 27264 / PCC 7002 / PR-6) (Agmenellum quadruplicatum) protein is 1-(5-phosphoribosyl)-5-[(5-phosphoribosylamino)methylideneamino] imidazole-4-carboxamide isomerase.